Reading from the N-terminus, the 551-residue chain is MSEKKVFVFGSFTEHETRSFFEQKPTKDPQNSKDKCVGSIQFGSLNLAAENSSVNTNGELKKGEADGTVKSAGSQERLDASRPASSDKNNDSDAKLPRKNSLRVPEHVVQNGIIKEISESNKSLNNGVAVKTDPIGLDNLSMSDGESDPVYKASSSKFQALDNEDFSSDSSSGSIQRKKNLKVPTESVPPVKDFTPRGLINAGNLCFLNATLQALLSCSPFVQLLQKIQLQDIPKADSPTLAAFSEFISELDVPSSSSIRNNVTVVEAGRPFRPAMFEGVLRNFTPDVLNNMSGRPRQEDAQEFLSFIMDQMHDELLKLKEQSPKVTASKSSVISSANDDGDEWETVGPKNKSAVTRTQSFVPSELSEIFGGQLKSVVKAKGTKASATVQPYLLLHLDIHPDGVQGIEDALHLFSAQEDLEGYRASVTGKTGVVSASKSIKIQKLSKIMILHLMRFSYGSQGSTKLRKGVKFPLELNLNRSHLVSLSNESLRYELVATITHHGWDPSKGHYTTDARRKNGQWLRFDDASVTPIGTKLVLHDQAYVLFYKQV.

Disordered stretches follow at residues 51 to 104 and 163 to 188; these read NSSV…SLRV and NEDF…TESV. In terms of domain architecture, USP spans 197-551; the sequence is RGLINAGNLC…QAYVLFYKQV (355 aa). Catalysis depends on C206, which acts as the Nucleophile. Residues 329–338 are compositionally biased toward polar residues; it reads SKSSVISSAN. A disordered region spans residues 329-349; the sequence is SKSSVISSANDDGDEWETVGP. The Proton acceptor role is filled by H510.

Belongs to the peptidase C19 family.

The catalysed reaction is Thiol-dependent hydrolysis of ester, thioester, amide, peptide and isopeptide bonds formed by the C-terminal Gly of ubiquitin (a 76-residue protein attached to proteins as an intracellular targeting signal).. Its function is as follows. Recognizes and hydrolyzes the peptide bond at the C-terminal Gly of ubiquitin. Involved in the processing of poly-ubiquitin precursors as well as that of ubiquitinated proteins. The sequence is that of Ubiquitin carboxyl-terminal hydrolase 24 (UBP24) from Arabidopsis thaliana (Mouse-ear cress).